A 361-amino-acid polypeptide reads, in one-letter code: Peptide chain release factor 1 (361 aa).

Gln-233 bears the N5-methylglutamine mark. The tract at residues 282 to 310 is disordered; sequence SKKQAERAQNRKSQVGSGDRSERIRTYNF.

It belongs to the prokaryotic/mitochondrial release factor family. Methylated by PrmC. Methylation increases the termination efficiency of RF1.

The protein resides in the cytoplasm. Functionally, peptide chain release factor 1 directs the termination of translation in response to the peptide chain termination codons UAG and UAA. This Treponema denticola (strain ATCC 35405 / DSM 14222 / CIP 103919 / JCM 8153 / KCTC 15104) protein is Peptide chain release factor 1.